Reading from the N-terminus, the 204-residue chain is Large ribosomal subunit protein uL4 (204 aa).

A disordered region spans residues 49–72 (QKNRAAVSGGGKKPWRQKGTGRAR).

This sequence belongs to the universal ribosomal protein uL4 family. In terms of assembly, part of the 50S ribosomal subunit.

Functionally, one of the primary rRNA binding proteins, this protein initially binds near the 5'-end of the 23S rRNA. It is important during the early stages of 50S assembly. It makes multiple contacts with different domains of the 23S rRNA in the assembled 50S subunit and ribosome. In terms of biological role, forms part of the polypeptide exit tunnel. The chain is Large ribosomal subunit protein uL4 from Saccharophagus degradans (strain 2-40 / ATCC 43961 / DSM 17024).